Reading from the N-terminus, the 469-residue chain is Solute carrier family 52, riboflavin transporter, member 3 (469 aa).

Residues 1–2 are Cytoplasmic-facing; it reads MA. Residues 3–23 traverse the membrane as a helical segment; that stretch reads FLMHLLVCVFGMGSWVTINGL. The Extracellular segment spans residues 24–43; sequence WVELPLLVMELPEGWYLPSY. A helical transmembrane segment spans residues 44–64; that stretch reads LTVVIQLANIGPLLVTLLHHF. Residues 65-71 are Cytoplasmic-facing; it reads RPSCLSE. Residues 72–92 form a helical membrane-spanning segment; sequence VPIIFTLLGVGTVTCIIFAFL. The Extracellular portion of the chain corresponds to 93–97; it reads WNMTS. Asn-94 carries N-linked (GlcNAc...) asparagine glycosylation. A helical transmembrane segment spans residues 98–118; the sequence is WVLDGHHSIAFLVLTFFLALV. The Cytoplasmic portion of the chain corresponds to 119-137; that stretch reads DCTSSVTFLPFMSRLPTYY. Residues 138–158 traverse the membrane as a helical segment; it reads LTTFFVGEGLSGLLPALVALA. Residues 159 to 220 lie on the Extracellular side of the membrane; it reads QGSGLTTCVN…SRYLPAHFSP (62 aa). A glycan (N-linked (GlcNAc...) asparagine) is linked at Asn-168. Residues 221–241 form a helical membrane-spanning segment; it reads LVFFLLLSIMMACCLVAFFVL. At 242 to 292 the chain is on the cytoplasmic side; that stretch reads QRQPRCWEASVEDLLNDQVTLHSIRPREENDLGPAGTVDSSQGQGYLEEKA. Ser-251 carries the phosphoserine modification. Residues 293 to 313 form a helical membrane-spanning segment; sequence APCCPAHLAFIYTLVAFVNAL. The Extracellular segment spans residues 314 to 335; that stretch reads TNGMLPSVQTYSCLSYGPVAYH. The helical transmembrane segment at 336–356 threads the bilayer; that stretch reads LAATLSIVANPLASLVSMFLP. At 357-359 the chain is on the cytoplasmic side; the sequence is NRS. Residues 360 to 380 traverse the membrane as a helical segment; that stretch reads LLFLGVLSVLGTCFGGYNMAM. Topologically, residues 381–396 are extracellular; sequence AVMSPCPLLQGHWGGE. Cys-386 and Cys-463 are joined by a disulfide. Residues 397 to 417 form a helical membrane-spanning segment; that stretch reads VLIVASWVLFSGCLSYVKVML. The Cytoplasmic segment spans residues 418–427; it reads GVVLRDLSRS. A helical membrane pass occupies residues 428 to 448; the sequence is ALLWCGAAVQLGSLLGALLMF. Residues 449-469 lie on the Extracellular side of the membrane; the sequence is PLVNVLRLFSSADFCNLHCPA.

Belongs to the riboflavin transporter family. As to expression, predominantly expressed in testis. Highly expressed in small intestine and prostate.

The protein resides in the apical cell membrane. Its subcellular location is the cell membrane. The protein localises to the nucleus membrane. It localises to the cytoplasm. The catalysed reaction is riboflavin(in) = riboflavin(out). Activity is strongly inhibited by riboflavin analogs, such as lumiflavin, flavin mononucleotide (FMN), flavin adenine dinucleotide (FAD), by methylene blue, and to a lesser extent by amiloride. Riboflavin transport is Na(+)-independent at low pH but significantly reduced by Na(+) depletion under neutral pH conditions. Its function is as follows. Plasma membrane transporter mediating the uptake by cells of the water soluble vitamin B2/riboflavin that plays a key role in biochemical oxidation-reduction reactions of the carbohydrate, lipid, and amino acid metabolism. Humans are unable to synthesize vitamin B2/riboflavin and must obtain it via intestinal absorption. This Homo sapiens (Human) protein is Solute carrier family 52, riboflavin transporter, member 3 (SLC52A3).